A 323-amino-acid chain; its full sequence is tRNA U34 carboxymethyltransferase (323 aa).

Carboxy-S-adenosyl-L-methionine contacts are provided by residues Lys91, Trp105, Lys110, Gly130, 152–154, 181–182, Met196, Tyr200, and Arg315; these read DPT and IE.

It belongs to the class I-like SAM-binding methyltransferase superfamily. CmoB family. As to quaternary structure, homotetramer.

The enzyme catalyses carboxy-S-adenosyl-L-methionine + 5-hydroxyuridine(34) in tRNA = 5-carboxymethoxyuridine(34) in tRNA + S-adenosyl-L-homocysteine + H(+). Functionally, catalyzes carboxymethyl transfer from carboxy-S-adenosyl-L-methionine (Cx-SAM) to 5-hydroxyuridine (ho5U) to form 5-carboxymethoxyuridine (cmo5U) at position 34 in tRNAs. The sequence is that of tRNA U34 carboxymethyltransferase from Escherichia coli O7:K1 (strain IAI39 / ExPEC).